The primary structure comprises 93 residues: Small ribosomal subunit protein uS15 (93 aa).

Belongs to the universal ribosomal protein uS15 family. Part of the 30S ribosomal subunit. Forms a bridge to the 50S subunit in the 70S ribosome, contacting the 23S rRNA.

In terms of biological role, one of the primary rRNA binding proteins, it binds directly to 16S rRNA where it helps nucleate assembly of the platform of the 30S subunit by binding and bridging several RNA helices of the 16S rRNA. Its function is as follows. Forms an intersubunit bridge (bridge B4) with the 23S rRNA of the 50S subunit in the ribosome. This Ehrlichia chaffeensis (strain ATCC CRL-10679 / Arkansas) protein is Small ribosomal subunit protein uS15.